Reading from the N-terminus, the 292-residue chain is Porphobilinogen deaminase (292 aa).

Cys236 carries the post-translational modification S-(dipyrrolylmethanemethyl)cysteine.

This sequence belongs to the HMBS family. In terms of assembly, monomer. It depends on dipyrromethane as a cofactor.

The catalysed reaction is 4 porphobilinogen + H2O = hydroxymethylbilane + 4 NH4(+). It functions in the pathway porphyrin-containing compound metabolism; protoporphyrin-IX biosynthesis; coproporphyrinogen-III from 5-aminolevulinate: step 2/4. Tetrapolymerization of the monopyrrole PBG into the hydroxymethylbilane pre-uroporphyrinogen in several discrete steps. The protein is Porphobilinogen deaminase of Wolbachia sp. subsp. Drosophila simulans (strain wRi).